Here is a 283-residue protein sequence, read N- to C-terminus: Phosphatidylglycerol--prolipoprotein diacylglyceryl transferase (283 aa).

A run of 7 helical transmembrane segments spans residues 18-38 (LGGIEVHWYGLAYACAIVVAF), 62-82 (YFLWAELGIVLGARIGYVLIY), 106-126 (FIGIRGMSYHGGLVGFLIASY), 136-156 (LLIYLDLIAISLPLGYVFGRI), 190-210 (PSQLIEAFLEGVVVFLMVMWA), 218-238 (GLLIVVYGLGYSLMRFIAEFY), and 252-272 (LSMGQILSVFMVIVSLGILLY). Residue R155 participates in a 1,2-diacyl-sn-glycero-3-phospho-(1'-sn-glycerol) binding.

The protein belongs to the Lgt family.

The protein localises to the cell inner membrane. The catalysed reaction is L-cysteinyl-[prolipoprotein] + a 1,2-diacyl-sn-glycero-3-phospho-(1'-sn-glycerol) = an S-1,2-diacyl-sn-glyceryl-L-cysteinyl-[prolipoprotein] + sn-glycerol 1-phosphate + H(+). It functions in the pathway protein modification; lipoprotein biosynthesis (diacylglyceryl transfer). Its function is as follows. Catalyzes the transfer of the diacylglyceryl group from phosphatidylglycerol to the sulfhydryl group of the N-terminal cysteine of a prolipoprotein, the first step in the formation of mature lipoproteins. In Helicobacter pylori (strain J99 / ATCC 700824) (Campylobacter pylori J99), this protein is Phosphatidylglycerol--prolipoprotein diacylglyceryl transferase.